The sequence spans 252 residues: Ribosomal RNA small subunit methyltransferase J (252 aa).

Residues 105 to 106 (RD), 121 to 122 (ER), and Asp175 each bind S-adenosyl-L-methionine.

This sequence belongs to the methyltransferase superfamily. RsmJ family.

It is found in the cytoplasm. The enzyme catalyses guanosine(1516) in 16S rRNA + S-adenosyl-L-methionine = N(2)-methylguanosine(1516) in 16S rRNA + S-adenosyl-L-homocysteine + H(+). Functionally, specifically methylates the guanosine in position 1516 of 16S rRNA. This is Ribosomal RNA small subunit methyltransferase J from Pasteurella multocida (strain Pm70).